Here is a 98-residue protein sequence, read N- to C-terminus: NADH-ubiquinone oxidoreductase chain 4L (98 aa).

3 helical membrane-spanning segments follow: residues Met-1–Ile-21, Ser-29–Leu-49, and Ile-61–Val-81.

It belongs to the complex I subunit 4L family. In terms of assembly, core subunit of respiratory chain NADH dehydrogenase (Complex I) which is composed of 45 different subunits.

The protein resides in the mitochondrion inner membrane. The enzyme catalyses a ubiquinone + NADH + 5 H(+)(in) = a ubiquinol + NAD(+) + 4 H(+)(out). In terms of biological role, core subunit of the mitochondrial membrane respiratory chain NADH dehydrogenase (Complex I) which catalyzes electron transfer from NADH through the respiratory chain, using ubiquinone as an electron acceptor. Part of the enzyme membrane arm which is embedded in the lipid bilayer and involved in proton translocation. The sequence is that of NADH-ubiquinone oxidoreductase chain 4L (MT-ND4L) from Echinops telfairi (Lesser hedgehog tenrec).